The following is a 318-amino-acid chain: Transaldolase (318 aa).

Residue Lys132 is the Schiff-base intermediate with substrate of the active site.

The protein belongs to the transaldolase family. Type 1 subfamily. Homodimer.

It localises to the cytoplasm. The catalysed reaction is D-sedoheptulose 7-phosphate + D-glyceraldehyde 3-phosphate = D-erythrose 4-phosphate + beta-D-fructose 6-phosphate. Its pathway is carbohydrate degradation; pentose phosphate pathway; D-glyceraldehyde 3-phosphate and beta-D-fructose 6-phosphate from D-ribose 5-phosphate and D-xylulose 5-phosphate (non-oxidative stage): step 2/3. Transaldolase is important for the balance of metabolites in the pentose-phosphate pathway. The polypeptide is Transaldolase (Shewanella baltica (strain OS155 / ATCC BAA-1091)).